We begin with the raw amino-acid sequence, 480 residues long: CASP8 and FADD-like apoptosis regulator (480 aa).

DED domains are found at residues 1–73 (MSAE…RILK) and 92–170 (DYRV…KIQK). The tract at residues 1-195 (MSAEVIHQVE…LQAAIQKSLK (195 aa)) is interaction with CASP8. An interaction with FADD region spans residues 1–227 (MSAEVIHQVE…GAQQEPVKKS (227 aa)). The tract at residues 1–305 (MSAEVIHQVE…FACMPEHRDY (305 aa)) is interaction with CASP8 propeptide. The tract at residues 1-435 (MSAEVIHQVE…CLSQKLRQER (435 aa)) is not proteolytically processed and involved in apoptosis inhibition. An interaction with CASP3 region spans residues 192-435 (KSLKDPSNNF…CLSQKLRQER (244 aa)). The segment at 192–480 (KSLKDPSNNF…LRKKLILSYT (289 aa)) is interaction with TRAF1 and TRAF2. Positions 217–480 (LGAQQEPVKK…LRKKLILSYT (264 aa)) are interaction with CASP8 subunits p18 and p10. Residues 263-358 (ETELLRDTFT…AGKPKMFFIQ (96 aa)) form a caspase region. The tract at residues 370 to 480 (SSLLEVDGPA…LRKKLILSYT (111 aa)) is interaction with CASP8.

It belongs to the peptidase C14A family. In terms of assembly, TNFRSF6 stimulation triggers recruitment to the death-inducing signaling complex (DISC) formed by TNFRSF6, FADD and CASP8. A proteolytic fragment (p43) stays associated with the DISC. Also interacts with FADD, CASP8, CASP3, TRAF1, TRAF2 and Bcl-X(L) (in vitro). Interacts with RIPK1. (Microbial infection) Interacts with HBV protein X. Post-translationally, proteolytically processed by CASP8 generating subunit p43 and p12. Widely expressed. Higher expression in skeletal muscle, pancreas, heart, kidney, placenta, and peripheral blood leukocytes. Also detected in diverse cell lines. Isoform 8 is predominantly expressed in testis and skeletal muscle.

Functionally, apoptosis regulator protein which may function as a crucial link between cell survival and cell death pathways in mammalian cells. Acts as an inhibitor of TNFRSF6 mediated apoptosis. A proteolytic fragment (p43) is likely retained in the death-inducing signaling complex (DISC) thereby blocking further recruitment and processing of caspase-8 at the complex. Full length and shorter isoforms have been shown either to induce apoptosis or to reduce TNFRSF-triggered apoptosis. Lacks enzymatic (caspase) activity. The chain is CASP8 and FADD-like apoptosis regulator (CFLAR) from Homo sapiens (Human).